The chain runs to 321 residues: NADH-quinone oxidoreductase subunit H (321 aa).

8 helical membrane passes run Leu-9–Met-29, Ile-78–Met-98, Ile-111–Gly-131, Phe-156–Ile-176, Ile-183–Ile-203, Phe-234–Phe-254, Leu-262–Ile-282, and Ile-296–Val-316.

It belongs to the complex I subunit 1 family. In terms of assembly, NDH-1 is composed of 14 different subunits. Subunits NuoA, H, J, K, L, M, N constitute the membrane sector of the complex.

The protein localises to the cell membrane. It carries out the reaction a quinone + NADH + 5 H(+)(in) = a quinol + NAD(+) + 4 H(+)(out). NDH-1 shuttles electrons from NADH, via FMN and iron-sulfur (Fe-S) centers, to quinones in the respiratory chain. The immediate electron acceptor for the enzyme in this species is believed to be ubiquinone. Couples the redox reaction to proton translocation (for every two electrons transferred, four hydrogen ions are translocated across the cytoplasmic membrane), and thus conserves the redox energy in a proton gradient. This subunit may bind ubiquinone. This Baumannia cicadellinicola subsp. Homalodisca coagulata protein is NADH-quinone oxidoreductase subunit H.